The chain runs to 365 residues: TD and POZ domain-containing protein 1 (365 aa).

Positions K19–V149 constitute an MATH domain. A BTB domain is found at T188–K250.

This sequence belongs to the Tdpoz family.

The sequence is that of TD and POZ domain-containing protein 1 from Mus musculus (Mouse).